A 492-amino-acid polypeptide reads, in one-letter code: Catalase isozyme A (492 aa).

A disordered region spans residues 1-23 (MDPCKFRPSSSFDTKTTTTNAGA). The span at 8 to 21 (PSSSFDTKTTTTNA) shows a compositional bias: polar residues. Residues H65 and N138 contribute to the active site. Y348 serves as a coordination point for heme.

It belongs to the catalase family. As to quaternary structure, homotetramer. It depends on heme as a cofactor.

The protein resides in the peroxisome. It localises to the glyoxysome. The catalysed reaction is 2 H2O2 = O2 + 2 H2O. Functionally, occurs in almost all aerobically respiring organisms and serves to protect cells from the toxic effects of hydrogen peroxide. In Oryza sativa subsp. indica (Rice), this protein is Catalase isozyme A.